The sequence spans 92 residues: Conotoxin Mr15.3 (92 aa).

A signal peptide spans 1–20 (MSTLKMMLLILLLLLPMATF). Positions 21-53 (DSDGQAIPGGGIPSAVNSRVRGDEKSGRSLEKR) are excised as a propeptide.

It belongs to the conotoxin N superfamily. Post-translationally, contains 4 disulfide bonds. In terms of tissue distribution, expressed by the venom duct.

Its subcellular location is the secreted. This is Conotoxin Mr15.3 from Conus marmoreus (Marble cone).